Consider the following 259-residue polypeptide: Phosphatidylglycerol--prolipoprotein diacylglyceryl transferase (259 aa).

Transmembrane regions (helical) follow at residues 16–36, 55–75, 92–112, and 117–137; these read LAIS…WFYA, FITY…VLLY, EGGM…YLFC, and INFL…LFLG. R138 contributes to the a 1,2-diacyl-sn-glycero-3-phospho-(1'-sn-glycerol) binding site. 3 consecutive transmembrane segments (helical) span residues 172–192, 201–221, and 228–248; these read QLYE…YATF, GLNS…IEIF, and IGFI…MLLL.

It belongs to the Lgt family.

It localises to the cell inner membrane. It carries out the reaction L-cysteinyl-[prolipoprotein] + a 1,2-diacyl-sn-glycero-3-phospho-(1'-sn-glycerol) = an S-1,2-diacyl-sn-glyceryl-L-cysteinyl-[prolipoprotein] + sn-glycerol 1-phosphate + H(+). It participates in protein modification; lipoprotein biosynthesis (diacylglyceryl transfer). Functionally, catalyzes the transfer of the diacylglyceryl group from phosphatidylglycerol to the sulfhydryl group of the N-terminal cysteine of a prolipoprotein, the first step in the formation of mature lipoproteins. The protein is Phosphatidylglycerol--prolipoprotein diacylglyceryl transferase of Rickettsia rickettsii (strain Iowa).